A 381-amino-acid polypeptide reads, in one-letter code: DNA dC-&gt;dU-editing enzyme APOBEC-3G (381 aa).

Positions 1–62 (MKPQTRNTVV…ANIFQGQVSF (62 aa)) are essential for cytoplasmic localization. CMP/dCMP-type deaminase domains are found at residues 29–143 (HRNT…SQTG) and 211–325 (GQHQ…LRRL). Thr-32 carries the post-translational modification Phosphothreonine; by PKA. 3 residues coordinate Zn(2+): His-67, Cys-98, and Cys-101. A necessary for homooligomerization region spans residues 206 to 333 (DPSVLGQHQS…RLDRAGTPIS (128 aa)). The segment at 210 to 212 (LGQ) is interaction with DNA. A Zn(2+)-binding site is contributed by His-254. Residue Glu-256 is the Proton donor of the active site. The Zn(2+) site is built by Cys-285 and Cys-288. Residues 310–317 (RIYDYQRG) form an interaction with DNA region.

This sequence belongs to the cytidine and deoxycytidylate deaminase family. Homodimer. Homooligomer. Can bind RNA to form ribonucleoprotein complexes of high-molecular-mass (HMM) or low-molecular-mass (LMM). HMM is inactive and heterogeneous in protein composition because of binding nonselectively to cellular RNAs, which in turn are associated with variety of cellular proteins. The LMM form which is enzymatically active has few or no RNAs associated. Its ability to form homooligomer is distinct from its ability to assemble into HMM. Interacts with APOBEC3B, APOBEC3F, MOV10, AGO2, EIF4E, EIF4ENIF1, DCP2 and DDX6 in an RNA-dependent manner. Interacts with AGO1, AGO3 and PKA/PRKACA. The cofactor is Zn(2+).

The protein localises to the cytoplasm. The protein resides in the nucleus. It localises to the P-body. It carries out the reaction a 2'-deoxycytidine in single-stranded DNA + H2O + H(+) = a 2'-deoxyuridine in single-stranded DNA + NH4(+). Functionally, DNA deaminase (cytidine deaminase) which acts as an inhibitor of retrovirus replication and retrotransposon mobility. After the penetration of retroviral nucleocapsids into target cells of infection and the initiation of reverse transcription, it can induce the conversion of cytosine to uracil in the minus-sense single-strand viral DNA, leading to G-to-A hypermutations in the subsequent plus-strand viral DNA. The resultant detrimental levels of mutations in the proviral genome, along with a deamination-independent mechanism that works prior to the proviral integration, together exert efficient antiretroviral effects in infected target cells. Selectively targets single-stranded DNA and does not deaminate double-stranded DNA or single- or double-stranded RNA. The chain is DNA dC-&gt;dU-editing enzyme APOBEC-3G (APOBEC3G) from Lagothrix lagotricha (Brown woolly monkey).